The chain runs to 353 residues: Paraneoplastic antigen Ma1 (353 aa).

It belongs to the PNMA family. In terms of tissue distribution, testis- and brain-specific. In some cancer patients, specifically expressed by paraneoplastic tumor cells.

Its subcellular location is the nucleus. The protein resides in the nucleolus. In Homo sapiens (Human), this protein is Paraneoplastic antigen Ma1 (PNMA1).